A 379-amino-acid chain; its full sequence is Omega-3 fatty acid desaturase, endoplasmic reticulum (379 aa).

A helical membrane pass occupies residues 52 to 72; that stretch reads LSYVVRDVIFVATLIGIAIHL. The short motif at 97 to 101 is the Histidine box-1 element; sequence HDCGH. Residues 133–137 carry the Histidine box-2 motif; that stretch reads HKTHH. Transmembrane regions (helical) follow at residues 213–233 and 236–256; these read TLCW…FGSL and FKIY…VTYL. Residues 300–304 carry the Histidine box-3 motif; it reads HVIHH.

Belongs to the fatty acid desaturase type 1 family.

It localises to the endoplasmic reticulum membrane. Its pathway is lipid metabolism; polyunsaturated fatty acid biosynthesis. ER (microsomal) omega-3 fatty acid desaturase introduces the third double bond in the biosynthesis of 18:3 fatty acids, important constituents of plant membranes. It is thought to use cytochrome b5 as an electron donor and to act on fatty acids esterified to phosphatidylcholine and, possibly, other phospholipids. The chain is Omega-3 fatty acid desaturase, endoplasmic reticulum (FAD3) from Nicotiana tabacum (Common tobacco).